The sequence spans 154 residues: Large ribosomal subunit protein uL22c (154 aa).

It belongs to the universal ribosomal protein uL22 family. As to quaternary structure, part of the 50S ribosomal subunit.

The protein localises to the plastid. Its subcellular location is the chloroplast. In terms of biological role, this protein binds specifically to 23S rRNA. The globular domain of the protein is located near the polypeptide exit tunnel on the outside of the subunit, while an extended beta-hairpin is found that lines the wall of the exit tunnel in the center of the 70S ribosome. This is Large ribosomal subunit protein uL22c (rpl22) from Guizotia abyssinica (Niger).